Consider the following 431-residue polypeptide: MKILDWSQLDGAARTDALTRPVQTVATQTRDAVAALIADVRARGDAALREITARFDGVSLESFAVSEADFAAAEAAVAPELRQAMQDAVARIDAFHRAGMSEGYAVETAPGVVCEKIVRPIGRVGLYVPAGSAPLPSTALMLGVPARLAGCREVVLCTPPRKDGSVDPAVLVAAQLTGVRRVFKLGGAQAIAAMAYGTESVPSCDKLFGPGNSYVTEAKQQVAQSGAAAIDMPAGPSEVLVIADAGAQPAFVAADLLSQAEHGPDSQVLLLSDSDGLIDAVQVQLEVQLAQLSRADIARQALAQSRMIKVQALDEAFAISNRYAPEHLILALREPRAWLAQVEAAGSVFLGDYTPEALGDYCSGTNHVLPTSGAARAYSGVSVASFQNMVSVQAASKAGIDGIGQCALILARAEGLDAHANAVALRMGVAA.

3 residues coordinate NAD(+): tyrosine 127, glutamine 189, and asparagine 212. Substrate is bound by residues serine 237, glutamine 259, and histidine 262. Zn(2+)-binding residues include glutamine 259 and histidine 262. Residues glutamate 326 and histidine 327 each act as proton acceptor in the active site. Substrate is bound by residues histidine 327, aspartate 360, glutamate 414, and histidine 419. A Zn(2+)-binding site is contributed by aspartate 360. Position 419 (histidine 419) interacts with Zn(2+).

This sequence belongs to the histidinol dehydrogenase family. It depends on Zn(2+) as a cofactor.

It catalyses the reaction L-histidinol + 2 NAD(+) + H2O = L-histidine + 2 NADH + 3 H(+). It participates in amino-acid biosynthesis; L-histidine biosynthesis; L-histidine from 5-phospho-alpha-D-ribose 1-diphosphate: step 9/9. Its function is as follows. Catalyzes the sequential NAD-dependent oxidations of L-histidinol to L-histidinaldehyde and then to L-histidine. This is Histidinol dehydrogenase from Xanthomonas euvesicatoria pv. vesicatoria (strain 85-10) (Xanthomonas campestris pv. vesicatoria).